The primary structure comprises 473 residues: Cell division protein FtsP (473 aa).

Residues Met1–Ala27 constitute a signal peptide (tat-type signal).

It belongs to the FtsP family. Predicted to be exported by the Tat system. The position of the signal peptide cleavage has not been experimentally proven.

It localises to the periplasm. Its function is as follows. Cell division protein that is required for growth during stress conditions. May be involved in protecting or stabilizing the divisomal assembly under conditions of stress. In Xenorhabdus nematophila (strain ATCC 19061 / DSM 3370 / CCUG 14189 / LMG 1036 / NCIMB 9965 / AN6), this protein is Cell division protein FtsP.